We begin with the raw amino-acid sequence, 318 residues long: Protein-methionine-sulfoxide reductase catalytic subunit MsrP (318 aa).

The tat-type signal signal peptide spans 1–40; sequence MKQLMMSDVTPEEIFNQRRQIIKSMGLGIATLGLPNIAFA. Residues Asn72, 75 to 76, Cys130, Thr165, Asn217, Arg222, and 233 to 235 each bind Mo-molybdopterin; these read YE and SIK.

The protein belongs to the MsrP family. Heterodimer of a catalytic subunit (MsrP) and a heme-binding subunit (MsrQ). The cofactor is Mo-molybdopterin. Predicted to be exported by the Tat system. The position of the signal peptide cleavage has not been experimentally proven.

The protein resides in the periplasm. It carries out the reaction L-methionyl-[protein] + a quinone + H2O = L-methionyl-(S)-S-oxide-[protein] + a quinol. It catalyses the reaction L-methionyl-[protein] + a quinone + H2O = L-methionyl-(R)-S-oxide-[protein] + a quinol. Its function is as follows. Part of the MsrPQ system that repairs oxidized periplasmic proteins containing methionine sulfoxide residues (Met-O), using respiratory chain electrons. Thus protects these proteins from oxidative-stress damage caused by reactive species of oxygen and chlorine generated by the host defense mechanisms. MsrPQ is essential for the maintenance of envelope integrity under bleach stress, rescuing a wide series of structurally unrelated periplasmic proteins from methionine oxidation. The catalytic subunit MsrP is non-stereospecific, being able to reduce both (R-) and (S-) diastereoisomers of methionine sulfoxide. This chain is Protein-methionine-sulfoxide reductase catalytic subunit MsrP, found in Haemophilus ducreyi (strain 35000HP / ATCC 700724).